A 647-amino-acid polypeptide reads, in one-letter code: DNA ligase (647 aa).

NAD(+)-binding positions include 30–34 (DEEYD), 79–80 (SM), and Glu-105. Lys-107 serves as the catalytic N6-AMP-lysine intermediate. The NAD(+) site is built by Arg-128, Glu-162, and Lys-301. The Zn(2+) site is built by Cys-395, Cys-398, Cys-411, and Cys-416. Positions 570-647 (KSDGVIFGKT…ESAFNELVKE (78 aa)) constitute a BRCT domain.

This sequence belongs to the NAD-dependent DNA ligase family. LigA subfamily. Mg(2+) serves as cofactor. The cofactor is Mn(2+).

It carries out the reaction NAD(+) + (deoxyribonucleotide)n-3'-hydroxyl + 5'-phospho-(deoxyribonucleotide)m = (deoxyribonucleotide)n+m + AMP + beta-nicotinamide D-nucleotide.. Functionally, DNA ligase that catalyzes the formation of phosphodiester linkages between 5'-phosphoryl and 3'-hydroxyl groups in double-stranded DNA using NAD as a coenzyme and as the energy source for the reaction. It is essential for DNA replication and repair of damaged DNA. The sequence is that of DNA ligase from Campylobacter jejuni subsp. jejuni serotype O:23/36 (strain 81-176).